Reading from the N-terminus, the 236-residue chain is Small ribosomal subunit protein uS2c (236 aa).

The protein belongs to the universal ribosomal protein uS2 family.

It localises to the plastid. It is found in the chloroplast. This Eucalyptus globulus subsp. globulus (Tasmanian blue gum) protein is Small ribosomal subunit protein uS2c (rps2).